Here is a 321-residue protein sequence, read N- to C-terminus: uncharacterized protein (321 aa).

Residues 1–6 are Extracellular-facing; sequence MDIIRK. The helical transmembrane segment at 7 to 29 threads the bilayer; that stretch reads ISHFAGQTFGIWVIVFAVLGFSF. Residues 30 to 34 lie on the Cytoplasmic side of the membrane; it reads PSLFT. The helical transmembrane segment at 35-57 threads the bilayer; that stretch reads WISSYITIFLGIIMFGMGLTLQA. Over 58-69 the chain is Extracellular; that stretch reads DDFKELVRKPWQ. Residues 70–92 traverse the membrane as a helical segment; that stretch reads VIIGVIAQYTIMPLVAFGLAFGL. Residues 93–97 are Cytoplasmic-facing; that stretch reads HLPAE. The helical transmembrane segment at 98–120 threads the bilayer; the sequence is IAVGVILVGCCPGGTASNVMTFL. The Extracellular segment spans residues 121–129; it reads AKGNTALSV. The helical transmembrane segment at 130-150 threads the bilayer; it reads AVTTISTLLAPVVTPLLIMLF. Topologically, residues 151–159 are cytoplasmic; sequence AKEWLPVSP. Residues 160-180 form a helical membrane-spanning segment; that stretch reads GSLFISILQAVLFPIIAGLIV. Over 181–190 the chain is Extracellular; it reads KMFFRKQVAK. Residues 191–211 form a helical membrane-spanning segment; that stretch reads AVHALPLVSVIGIVAIVSAVV. Residues 212–221 are Cytoplasmic-facing; that stretch reads SGNRENLLQS. The helical transmembrane segment at 222–242 threads the bilayer; sequence GLLIFSVVILHNGIGYLLGFL. Residues 243 to 267 are Extracellular-facing; the sequence is CAKLLKMDYPSQKAIAIEVGMQNSG. Residues 268-288 form a helical membrane-spanning segment; it reads LGAALATAHFSPLSAVPSAIF. Topologically, residues 289-321 are cytoplasmic; it reads SVWHNLSGSMLATYWSKKVKKKQAGSKSSNLSL.

The protein belongs to the bile acid:sodium symporter (BASS) (TC 2.A.28) family.

It localises to the cell membrane. This is an uncharacterized protein from Bacillus subtilis (strain 168).